Consider the following 132-residue polypeptide: Small ribosomal subunit protein uS8 (132 aa).

Belongs to the universal ribosomal protein uS8 family. Part of the 30S ribosomal subunit. Contacts proteins S5 and S12.

In terms of biological role, one of the primary rRNA binding proteins, it binds directly to 16S rRNA central domain where it helps coordinate assembly of the platform of the 30S subunit. The sequence is that of Small ribosomal subunit protein uS8 from Borrelia hermsii (strain HS1 / DAH).